The following is a 396-amino-acid chain: Carbamoyl phosphate synthase small chain (396 aa).

The CPSase stretch occupies residues 1 to 204; sequence MTQHDNDPAW…WDKGFGQQDK (204 aa). Residues serine 59, glycine 256, and glycine 258 each contribute to the L-glutamine site. Residues 208 to 396 enclose the Glutamine amidotransferase type-1 domain; the sequence is NVVAIDYGIK…AELMRQKKSA (189 aa). The active-site Nucleophile is cysteine 285. Residues leucine 286, glutamine 289, asparagine 327, glycine 329, and phenylalanine 330 each coordinate L-glutamine. Residues histidine 369 and glutamate 371 contribute to the active site.

Belongs to the CarA family. As to quaternary structure, composed of two chains; the small (or glutamine) chain promotes the hydrolysis of glutamine to ammonia, which is used by the large (or ammonia) chain to synthesize carbamoyl phosphate. Tetramer of heterodimers (alpha,beta)4.

The catalysed reaction is hydrogencarbonate + L-glutamine + 2 ATP + H2O = carbamoyl phosphate + L-glutamate + 2 ADP + phosphate + 2 H(+). It carries out the reaction L-glutamine + H2O = L-glutamate + NH4(+). Its pathway is amino-acid biosynthesis; L-arginine biosynthesis; carbamoyl phosphate from bicarbonate: step 1/1. The protein operates within pyrimidine metabolism; UMP biosynthesis via de novo pathway; (S)-dihydroorotate from bicarbonate: step 1/3. Its function is as follows. Small subunit of the glutamine-dependent carbamoyl phosphate synthetase (CPSase). CPSase catalyzes the formation of carbamoyl phosphate from the ammonia moiety of glutamine, carbonate, and phosphate donated by ATP, constituting the first step of 2 biosynthetic pathways, one leading to arginine and/or urea and the other to pyrimidine nucleotides. The small subunit (glutamine amidotransferase) binds and cleaves glutamine to supply the large subunit with the substrate ammonia. This is Carbamoyl phosphate synthase small chain from Bradyrhizobium diazoefficiens (strain JCM 10833 / BCRC 13528 / IAM 13628 / NBRC 14792 / USDA 110).